A 1089-amino-acid chain; its full sequence is Importin subunit beta-3 (1089 aa).

Position 2 is an N-acetylserine (S2). HEAT repeat units lie at residues 6-39 (EEVNRTLLQIVQAFASPDNQIRSVAEKALSEEWI), 44-78 (IEYLLTFLAEQAAFSQDTTVAALSAVLFRKLALKA), 96-129 (KEVLAQIRSSLLKGFLSERADSIRHKLSDAIAEC), 138-165 (PELLQALIESLKSGNPNFRESSFRILTT), 175-207 (INSILPIFQSGFTDASDNVKIAAVTAFVGYFKQ), 216-252 (LGILLPSLLNSLPRFLDDGKDDALASVFESLIELVEL), 260-295 (MFDQIIQFTDMVIKNKDLEPPARTTALELLTVFSEN), 304-359 (QNYG…ALKL), 361-395 (GEYLAAPLFQYLQQMITSTEWRERFAAMMALSSAA), 399-439 (ADVL…STDF), 441-481 (PFIQ…FSEF), 484-524 (KDIL…AEAA), 526-568 (NKFI…GFAV), 571-613 (EKFH…CRIL), 615-689 (DDFV…ATLL), 692-735 (QFAV…LLAA), 742-781 (ELVLLWHKASSKLIGGLMSEPMPEITQVYHNSLVNGIKVM), 788-849 (EDQL…LKTT), 852-890 (HYLKNLENIWPMINTFLLDNEPILVIFALVVIGDLIQYG), 898-930 (KNAFIPKVTECLISPDARIRQAASYIIGVCAQY), 938-978 (VCIP…LYAY), 986-1017 (DTYTANWFKTLPTITDKEAASFNYQFLSQLIE), 1028-1063 (NISAVVDSVIQALNERSLTEREGQTVISSVKKLLGF), and 1066-1089 (SSDAMAIFNRYPADIMEKVHKWFA). Phosphothreonine is present on T830.

This sequence belongs to the importin beta family. Importin beta-3 subfamily. As to quaternary structure, interacts with Ran (GSP1); interacts specifically with the GTP-bound form of Ran (GTP-Ran), protecting it from GTP hydrolysis and nucleotide exchange. Interacts with RPL25; this interaction is dissociated by binding to Ran-GTP. Interacts with YAP1; this interaction is dissociated by binding to Ran-GTP. Interacts with NOP1; via its rg-NLS. Interacts with SOF1; via its cNLS. Interacts with histones H3 and H4; via their NLS. Interacts with ABF1.

It localises to the cytoplasm. Its subcellular location is the nucleus. In terms of biological role, functions in nuclear protein import as nuclear transport receptor. Serves as receptor for classical and arginine/glycine-rich nuclear localization signals (cNLS and rg-NLS) in cargo substrates. Its predominant cargo substrate seems to be ribosomal proteins and ribosome biogenesis trans- and cis-acting factors. Required for nuclear transport of YAP1, NOP1 and SOF1. Mediates the nuclear import of histones H3 and H4. Mediates docking of the importin/substrate complex to the nuclear pore complex (NPC) through binding to repeat-containing nucleoporins. The complex is subsequently translocated through the pore by an energy requiring, Ran-dependent mechanism. At the nucleoplasmic side of the NPC, GTP-Ran binding leads to release of the cargo. The importin is re-exported from the nucleus to the cytoplasm where GTP hydrolysis releases Ran from importin. The directionality of nuclear import is thought to be conferred by an asymmetric distribution of the GTP- and GDP-bound forms of Ran between the cytoplasm and nucleus. Plays a role in protein secretion. This is Importin subunit beta-3 from Saccharomyces cerevisiae (strain ATCC 204508 / S288c) (Baker's yeast).